The following is a 114-amino-acid chain: UPF0212 protein UNCMA_00570 (114 aa).

It belongs to the UPF0212 family.

In Methanocella arvoryzae (strain DSM 22066 / NBRC 105507 / MRE50), this protein is UPF0212 protein UNCMA_00570.